The primary structure comprises 253 residues: Phosphate import ATP-binding protein PstB 1 (253 aa).

An ABC transporter domain is found at 7–248; it reads LTVSDLSLYY…PEKQETSDYI (242 aa). 39–46 is a binding site for ATP; the sequence is GPSGCGKS.

The protein belongs to the ABC transporter superfamily. Phosphate importer (TC 3.A.1.7) family. As to quaternary structure, the complex is composed of two ATP-binding proteins (PstB), two transmembrane proteins (PstC and PstA) and a solute-binding protein (PstS).

It localises to the cell membrane. The catalysed reaction is phosphate(out) + ATP + H2O = ADP + 2 phosphate(in) + H(+). Its function is as follows. Part of the ABC transporter complex PstSACB involved in phosphate import. Responsible for energy coupling to the transport system. The sequence is that of Phosphate import ATP-binding protein PstB 1 from Lactococcus lactis subsp. lactis (strain IL1403) (Streptococcus lactis).